We begin with the raw amino-acid sequence, 403 residues long: Aminomethyltransferase, mitochondrial (403 aa).

The transit peptide at 1 to 28 (MQRAMTVVPHLGLRLQALPLALGRPLSR) directs the protein to the mitochondrion. Positions 232, 261, and 399 each coordinate substrate.

The protein belongs to the GcvT family. As to quaternary structure, the glycine cleavage system is composed of four proteins: P, T, L and H.

It localises to the mitochondrion. The enzyme catalyses N(6)-[(R)-S(8)-aminomethyldihydrolipoyl]-L-lysyl-[protein] + (6S)-5,6,7,8-tetrahydrofolate = N(6)-[(R)-dihydrolipoyl]-L-lysyl-[protein] + (6R)-5,10-methylene-5,6,7,8-tetrahydrofolate + NH4(+). In terms of biological role, the glycine cleavage system catalyzes the degradation of glycine. The protein is Aminomethyltransferase, mitochondrial of Canis lupus familiaris (Dog).